Reading from the N-terminus, the 573-residue chain is Anti-Muellerian hormone type-2 receptor (573 aa).

The signal sequence occupies residues 1–17 (MLGSLGLWALLPTAVEA). Topologically, residues 18-149 (PPNRRTCVFF…APGESIWMAL (132 aa)) are extracellular. Cystine bridges form between C55-C79 and C92-C109. N-linked (GlcNAc...) asparagine glycosylation occurs at N66. Residue N119 is glycosylated (N-linked (GlcNAc...) asparagine). The chain crosses the membrane as a helical span at residues 150-170 (VLLGLFLLLLLLLGSIILALL). The Cytoplasmic segment spans residues 171–573 (QRKNYRVRGE…PQPACTLSPV (403 aa)). One can recognise a Protein kinase domain in the interval 203–518 (LCFSQVIREG…AHPQESHPFP (316 aa)). Residues 209-217 (IREGGHAVV) and K230 each bind ATP. D333 serves as the catalytic Proton acceptor.

The protein belongs to the protein kinase superfamily. TKL Ser/Thr protein kinase family. TGFB receptor subfamily. In terms of assembly, interacts with type I receptor ACVR1. Mg(2+) is required as a cofactor. It depends on Mn(2+) as a cofactor.

It localises to the membrane. The enzyme catalyses L-threonyl-[receptor-protein] + ATP = O-phospho-L-threonyl-[receptor-protein] + ADP + H(+). It catalyses the reaction L-seryl-[receptor-protein] + ATP = O-phospho-L-seryl-[receptor-protein] + ADP + H(+). In terms of biological role, on ligand binding, forms a receptor complex consisting of two type II and two type I transmembrane serine/threonine kinases. Type II receptors phosphorylate and activate type I receptors which autophosphorylate, then bind and activate SMAD transcriptional regulators. Receptor for anti-Muellerian hormone. The protein is Anti-Muellerian hormone type-2 receptor (AMHR2) of Homo sapiens (Human).